The chain runs to 237 residues: Phosphoribosylaminoimidazole-succinocarboxamide synthase (237 aa).

The protein belongs to the SAICAR synthetase family.

It carries out the reaction 5-amino-1-(5-phospho-D-ribosyl)imidazole-4-carboxylate + L-aspartate + ATP = (2S)-2-[5-amino-1-(5-phospho-beta-D-ribosyl)imidazole-4-carboxamido]succinate + ADP + phosphate + 2 H(+). It participates in purine metabolism; IMP biosynthesis via de novo pathway; 5-amino-1-(5-phospho-D-ribosyl)imidazole-4-carboxamide from 5-amino-1-(5-phospho-D-ribosyl)imidazole-4-carboxylate: step 1/2. The chain is Phosphoribosylaminoimidazole-succinocarboxamide synthase from Oceanobacillus iheyensis (strain DSM 14371 / CIP 107618 / JCM 11309 / KCTC 3954 / HTE831).